A 184-amino-acid chain; its full sequence is Large ribosomal subunit protein uL15 (184 aa).

A disordered region spans residues 1-50 (MDLSSLRPAKGAVKNKKRVGRGQGSGNGTTAGKGNKGQQARSGYKRPINE). Over residues 21–35 (RGQGSGNGTTAGKGN) the composition is skewed to gly residues.

This sequence belongs to the universal ribosomal protein uL15 family. As to quaternary structure, part of the 50S ribosomal subunit.

Binds to the 23S rRNA. The chain is Large ribosomal subunit protein uL15 from Chlorobium luteolum (strain DSM 273 / BCRC 81028 / 2530) (Pelodictyon luteolum).